Reading from the N-terminus, the 482-residue chain is D-inositol 3-phosphate glycosyltransferase (482 aa).

His63 is a 1D-myo-inositol 3-phosphate binding site. Residues 69 to 70 (QP) and Gly77 each bind UDP-N-acetyl-alpha-D-glucosamine. 1D-myo-inositol 3-phosphate contacts are provided by residues 74-79 (DAGGMN), Lys132, Tyr165, Thr189, and Arg209. Positions 289, 294, and 355 each coordinate UDP-N-acetyl-alpha-D-glucosamine. Residues Tyr364, Arg365, and Ala367 each coordinate Mg(2+). UDP-N-acetyl-alpha-D-glucosamine contacts are provided by Glu377 and Glu385. Thr391 is a binding site for Mg(2+).

The protein belongs to the glycosyltransferase group 1 family. MshA subfamily. Homodimer.

It carries out the reaction 1D-myo-inositol 3-phosphate + UDP-N-acetyl-alpha-D-glucosamine = 1D-myo-inositol 2-acetamido-2-deoxy-alpha-D-glucopyranoside 3-phosphate + UDP + H(+). Catalyzes the transfer of a N-acetyl-glucosamine moiety to 1D-myo-inositol 3-phosphate to produce 1D-myo-inositol 2-acetamido-2-deoxy-glucopyranoside 3-phosphate in the mycothiol biosynthesis pathway. The polypeptide is D-inositol 3-phosphate glycosyltransferase (Salinispora tropica (strain ATCC BAA-916 / DSM 44818 / JCM 13857 / NBRC 105044 / CNB-440)).